The sequence spans 95 residues: MPRSLKKGPFVDVKLMEKVKKALESGDKKPIKTWSRRSTIIPEFIGLTFAVHNGRKFIPVYVTENMIGHKLGEFAPTRTFKGHAGSEEKKKAKGK.

Belongs to the universal ribosomal protein uS19 family.

Functionally, protein S19 forms a complex with S13 that binds strongly to the 16S ribosomal RNA. The polypeptide is Small ribosomal subunit protein uS19 (Thermodesulfovibrio yellowstonii (strain ATCC 51303 / DSM 11347 / YP87)).